The chain runs to 159 residues: Small ribosomal subunit protein uS4 (159 aa).

Residues 106–158 form the S4 RNA-binding domain; it reads RRLQTIVYRMGLAKSIYHARQLIVHGHIAVAGRRVSSPGFLVPRELEDKISLI.

This sequence belongs to the universal ribosomal protein uS4 family. In terms of assembly, part of the 30S ribosomal subunit. Contacts protein S5. The interaction surface between S4 and S5 is involved in control of translational fidelity.

Functionally, one of the primary rRNA binding proteins, it binds directly to 16S rRNA where it nucleates assembly of the body of the 30S subunit. With S5 and S12 plays an important role in translational accuracy. The chain is Small ribosomal subunit protein uS4 from Pyrobaculum neutrophilum (strain DSM 2338 / JCM 9278 / NBRC 100436 / V24Sta) (Thermoproteus neutrophilus).